The primary structure comprises 95 residues: Small ribosomal subunit protein uS14 (95 aa).

It belongs to the universal ribosomal protein uS14 family. Part of the 30S ribosomal subunit. Contacts proteins S3 and S10.

Binds 16S rRNA, required for the assembly of 30S particles and may also be responsible for determining the conformation of the 16S rRNA at the A site. The polypeptide is Small ribosomal subunit protein uS14 (Fusobacterium nucleatum subsp. nucleatum (strain ATCC 25586 / DSM 15643 / BCRC 10681 / CIP 101130 / JCM 8532 / KCTC 2640 / LMG 13131 / VPI 4355)).